The sequence spans 110 residues: Large ribosomal subunit protein uL22 (110 aa).

This sequence belongs to the universal ribosomal protein uL22 family. Part of the 50S ribosomal subunit.

Its function is as follows. This protein binds specifically to 23S rRNA; its binding is stimulated by other ribosomal proteins, e.g. L4, L17, and L20. It is important during the early stages of 50S assembly. It makes multiple contacts with different domains of the 23S rRNA in the assembled 50S subunit and ribosome. In terms of biological role, the globular domain of the protein is located near the polypeptide exit tunnel on the outside of the subunit, while an extended beta-hairpin is found that lines the wall of the exit tunnel in the center of the 70S ribosome. This Mycoplasma mobile (strain ATCC 43663 / 163K / NCTC 11711) (Mesomycoplasma mobile) protein is Large ribosomal subunit protein uL22.